A 225-amino-acid chain; its full sequence is Cold-regulated 413 inner membrane protein 1, chloroplastic (225 aa).

Residues 1–76 (MASLCLSSSR…RKRGSSVVCY (76 aa)) constitute a chloroplast transit peptide. Ala77 is a topological domain (stromal). A helical transmembrane segment spans residues 78 to 98 (APISANSLQWISTISCLALML). Residues 99 to 102 (ARGT) are Chloroplast intermembrane-facing. A helical membrane pass occupies residues 103–123 (GIHKSVVVPLFALHAPSSIVA). Residues 124-128 (WIKGE) lie on the Stromal side of the membrane. Residues 129–149 (YGVWAAFLALIARLFFTFPGE) traverse the membrane as a helical segment. The Chloroplast intermembrane segment spans residues 150–151 (LE). The chain crosses the membrane as a helical span at residues 152-172 (LPFIALLLVIVAPYQVMNIRG). Over 173-175 (KQE) the chain is Stromal. Residues 176–196 (GAIIAIAISGFLAFQHFSRAG) form a helical membrane-spanning segment. Topologically, residues 197–204 (SLEKAYEK) are chloroplast intermembrane. The helical transmembrane segment at 205-225 (GSVLATVAIIGVTVVSLLLLL) threads the bilayer.

It belongs to the Cold-regulated 413 protein family.

It is found in the plastid. Its subcellular location is the chloroplast inner membrane. The polypeptide is Cold-regulated 413 inner membrane protein 1, chloroplastic (COR413IM1) (Arabidopsis thaliana (Mouse-ear cress)).